A 442-amino-acid polypeptide reads, in one-letter code: Protein translocase subunit SecF (442 aa).

A disordered region spans residues 1 to 39 (MASKAKTGRDDEATSAVELTEATESAVARTDGDSTTDTA). 6 consecutive transmembrane segments (helical) span residues 67-87 (WFGV…FRGF), 187-207 (ITKK…LYIT), 218-238 (AITA…LVGF), 243-263 (ATVI…VIVF), 301-321 (LIGV…LGVG), and 331-351 (LIGI…LLVT). Residues 366-442 (VLKRRNSGSP…PTGKRNAGRR (77 aa)) are disordered. The span at 402-432 (QASSQSAPRAAQGSSKPAPGARPVRPVGTRR) shows a compositional bias: low complexity. Residues 433 to 442 (PTGKRNAGRR) are compositionally biased toward basic residues.

It belongs to the SecD/SecF family. SecF subfamily. In terms of assembly, forms a complex with SecD. Part of the essential Sec protein translocation apparatus which comprises SecA, SecYEG and auxiliary proteins SecDF. Other proteins may also be involved.

Its subcellular location is the cell membrane. In terms of biological role, part of the Sec protein translocase complex. Interacts with the SecYEG preprotein conducting channel. SecDF uses the proton motive force (PMF) to complete protein translocation after the ATP-dependent function of SecA. The chain is Protein translocase subunit SecF from Mycobacterium tuberculosis (strain ATCC 25618 / H37Rv).